Consider the following 214-residue polypeptide: Adenylate kinase (214 aa).

ATP is bound at residue 10–15; it reads GAGKGT. The segment at 30–59 is NMP; it reads STGDMFREEISAKSELGRKVEDILKRGELV. Residues Thr31, Arg36, 57-59, 85-88, and Gln92 each bind AMP; these read ELV and GYPR. Residues 126–163 are LID; the sequence is NRRICKNCGKIYNLITLPPKINGKCDVCGGELYQREDD. Arg127 serves as a coordination point for ATP. Residues Cys130 and Cys133 each contribute to the Zn(2+) site. Position 136–137 (136–137) interacts with ATP; the sequence is IY. Cys150 and Cys153 together coordinate Zn(2+). Residues Arg160 and Arg171 each contribute to the AMP site. Met199 lines the ATP pocket.

Belongs to the adenylate kinase family. In terms of assembly, monomer.

The protein localises to the cytoplasm. The enzyme catalyses AMP + ATP = 2 ADP. It functions in the pathway purine metabolism; AMP biosynthesis via salvage pathway; AMP from ADP: step 1/1. Functionally, catalyzes the reversible transfer of the terminal phosphate group between ATP and AMP. Plays an important role in cellular energy homeostasis and in adenine nucleotide metabolism. In Thermosipho melanesiensis (strain DSM 12029 / CIP 104789 / BI429), this protein is Adenylate kinase.